Reading from the N-terminus, the 158-residue chain is UPF0336 protein Mb0654 (158 aa).

This sequence belongs to the UPF0336 family.

The sequence is that of UPF0336 protein Mb0654 from Mycobacterium bovis (strain ATCC BAA-935 / AF2122/97).